Here is a 213-residue protein sequence, read N- to C-terminus: Probable nicotinate-nucleotide adenylyltransferase (213 aa).

It belongs to the NadD family.

It carries out the reaction nicotinate beta-D-ribonucleotide + ATP + H(+) = deamido-NAD(+) + diphosphate. Its pathway is cofactor biosynthesis; NAD(+) biosynthesis; deamido-NAD(+) from nicotinate D-ribonucleotide: step 1/1. In terms of biological role, catalyzes the reversible adenylation of nicotinate mononucleotide (NaMN) to nicotinic acid adenine dinucleotide (NaAD). The chain is Probable nicotinate-nucleotide adenylyltransferase from Trichlorobacter lovleyi (strain ATCC BAA-1151 / DSM 17278 / SZ) (Geobacter lovleyi).